We begin with the raw amino-acid sequence, 326 residues long: Ficolin-1 (326 aa).

A signal peptide spans 1-29 (MELSGATMARGLAVLLVLFLHIKNLPAQA). The region spanning 55–93 (GLPGAPGPKGEAGVIGERGERGLPGAPGKAGPVGPKGDR) is the Collagen-like domain. The tract at residues 72–111 (RGERGLPGAPGKAGPVGPKGDRGEKGMRGEKGDAGQSQSC) is disordered. The span at 77 to 89 (LPGAPGKAGPVGP) shows a compositional bias: low complexity. The segment covering 90–104 (KGDRGEKGMRGEKGD) has biased composition (basic and acidic residues). Positions 109 to 326 (QSCATGPRNC…KVSEMKVRPA (218 aa)) constitute a Fibrinogen C-terminal domain. 2 disulfides stabilise this stretch: cysteine 111/cysteine 139 and cysteine 118/cysteine 146. The segment at 115–154 (PRNCKDLLDRGYFLSGWHTIYLPDCRPLTVLCDMDTDGGG) is a domain; contributes to trimerization. The b domain; contributes to trimerization stretch occupies residues 155-243 (WTVFQRRMDG…LVLGAFVGGS (89 aa)). Ca(2+)-binding residues include aspartate 262, aspartate 264, serine 266, and serine 268. Cysteine 270 and cysteine 283 form a disulfide bridge. 282–284 (DCH) is a binding site for a carbohydrate. A glycan (N-linked (GlcNAc...) asparagine) is linked at asparagine 305. Positions 317–326 (KVSEMKVRPA) are p domain.

It belongs to the ficolin lectin family. In terms of assembly, homotrimer. Interacts with elastin/ELN. Interacts (via Fibrinogen C-terminal domain) with FFAR2. Interacts with CRP; may regulate monocyte activation by FCN1. Peripheral blood leukocytes, monocytes and granulocytes. Also detected in spleen, lung, and thymus, may be due to the presence of tissue macrophages or trapped blood in these tissues. Not detected on lymphocytes.

It is found in the secreted. It localises to the cell membrane. Its function is as follows. Extracellular lectin functioning as a pattern-recognition receptor in innate immunity. Binds the sugar moieties of pathogen-associated molecular patterns (PAMPs) displayed on microbes and activates the lectin pathway of the complement system. May also activate monocytes through a G protein-coupled receptor, FFAR2, inducing the secretion of interleukin-8/IL-8. Binds preferentially to 9-O-acetylated 2-6-linked sialic acid derivatives and to various glycans containing sialic acid engaged in a 2-3 linkage. In Homo sapiens (Human), this protein is Ficolin-1 (FCN1).